The primary structure comprises 426 residues: Serine--tRNA ligase (426 aa).

233 to 235 (TSE) is a binding site for L-serine. 264–266 (RSE) lines the ATP pocket. Glu287 serves as a coordination point for L-serine. Residue 351–354 (EISS) coordinates ATP. Ser387 is an L-serine binding site.

The protein belongs to the class-II aminoacyl-tRNA synthetase family. Type-1 seryl-tRNA synthetase subfamily. As to quaternary structure, homodimer. The tRNA molecule binds across the dimer.

It is found in the cytoplasm. It catalyses the reaction tRNA(Ser) + L-serine + ATP = L-seryl-tRNA(Ser) + AMP + diphosphate + H(+). The enzyme catalyses tRNA(Sec) + L-serine + ATP = L-seryl-tRNA(Sec) + AMP + diphosphate + H(+). The protein operates within aminoacyl-tRNA biosynthesis; selenocysteinyl-tRNA(Sec) biosynthesis; L-seryl-tRNA(Sec) from L-serine and tRNA(Sec): step 1/1. Its function is as follows. Catalyzes the attachment of serine to tRNA(Ser). Is also able to aminoacylate tRNA(Sec) with serine, to form the misacylated tRNA L-seryl-tRNA(Sec), which will be further converted into selenocysteinyl-tRNA(Sec). The sequence is that of Serine--tRNA ligase from Xylella fastidiosa (strain 9a5c).